A 257-amino-acid chain; its full sequence is Hydroxyethylthiazole kinase (257 aa).

M49 contacts substrate. R124 and T170 together coordinate ATP. G197 contacts substrate.

It belongs to the Thz kinase family. Requires Mg(2+) as cofactor.

The enzyme catalyses 5-(2-hydroxyethyl)-4-methylthiazole + ATP = 4-methyl-5-(2-phosphooxyethyl)-thiazole + ADP + H(+). The protein operates within cofactor biosynthesis; thiamine diphosphate biosynthesis; 4-methyl-5-(2-phosphoethyl)-thiazole from 5-(2-hydroxyethyl)-4-methylthiazole: step 1/1. In terms of biological role, catalyzes the phosphorylation of the hydroxyl group of 4-methyl-5-beta-hydroxyethylthiazole (THZ). In Klebsiella pneumoniae subsp. pneumoniae (strain ATCC 700721 / MGH 78578), this protein is Hydroxyethylthiazole kinase.